Reading from the N-terminus, the 113-residue chain is U11-theraphotoxin-Hhn1o (113 aa).

The first 21 residues, 1 to 21 (MNTVRVTFLLVFVLAVSLGQA), serve as a signal peptide directing secretion. Positions 22-74 (DKDENRMEMQEKTEQGKSYLDFAENLLLQKLEELEAKLLEEDSEESRNSRQKR) are excised as a propeptide. Residues 61–83 (EEDSEESRNSRQKRCIGEGVPCD) are disordered. 2 disulfides stabilise this stretch: Cys75-Cys90 and Cys82-Cys95.

It belongs to the neurotoxin 14 (magi-1) family. 01 (HNTX-16) subfamily. Expressed by the venom gland.

The protein localises to the secreted. In terms of biological role, probable ion channel inhibitor. The polypeptide is U11-theraphotoxin-Hhn1o (Cyriopagopus hainanus (Chinese bird spider)).